The chain runs to 275 residues: Ribosomal RNA small subunit methyltransferase A (275 aa).

S-adenosyl-L-methionine-binding residues include asparagine 15, leucine 17, glycine 42, glutamate 63, aspartate 88, and asparagine 111.

It belongs to the class I-like SAM-binding methyltransferase superfamily. rRNA adenine N(6)-methyltransferase family. RsmA subfamily.

The protein localises to the cytoplasm. The enzyme catalyses adenosine(1518)/adenosine(1519) in 16S rRNA + 4 S-adenosyl-L-methionine = N(6)-dimethyladenosine(1518)/N(6)-dimethyladenosine(1519) in 16S rRNA + 4 S-adenosyl-L-homocysteine + 4 H(+). Specifically dimethylates two adjacent adenosines (A1518 and A1519) in the loop of a conserved hairpin near the 3'-end of 16S rRNA in the 30S particle. May play a critical role in biogenesis of 30S subunits. This is Ribosomal RNA small subunit methyltransferase A from Geobacter metallireducens (strain ATCC 53774 / DSM 7210 / GS-15).